A 285-amino-acid polypeptide reads, in one-letter code: 2,4-didehydro-3-deoxy-L-rhamnonate hydrolase (285 aa).

A pyruvate-binding site is contributed by L73. 3 residues coordinate Mg(2+): E119, E121, and D150. Pyruvate contacts are provided by K168 and T238.

This sequence belongs to the FAH family. Homodimer. Mg(2+) is required as a cofactor.

The enzyme catalyses 2,4-didehydro-3-deoxy-L-rhamnonate + H2O = (S)-lactate + pyruvate + H(+). It participates in carbohydrate degradation; L-rhamnose degradation. In terms of biological role, hydrolase that catalyzes the hydrolysis of 2,4-didehydro-3-deoxy-L-rhamnonate to pyruvate and L-lactate. Can also hydrolyze L-2,4-diketo-3-deoxylyxonate and L-2,4-diketo-3-deoxymannonate. In vitro can also use acylpyruvates such as acetylpyruvate and trimethylacetopyruvate. Catalyzes the fifth (last) step in an alternative pathway for rhamnose utilization that does not involve phosphorylated intermediates. In Sphingomonas sp. (strain SKA58), this protein is 2,4-didehydro-3-deoxy-L-rhamnonate hydrolase.